Consider the following 255-residue polypeptide: Dehydrogenase/reductase SDR family member 11 (255 aa).

A signal peptide spans 1-25 (MERWRDRLALVTGASGGIGAAVARA). NADP(+)-binding positions include 13-18 (GASGGI), 38-39 (RT), Glu44, 65-66 (DL), and Asn92. Positions 146 and 161 each coordinate substrate. NADP(+)-binding positions include Tyr161, Lys165, 196-199 (VETQ), and Lys203. Tyr161 acts as the Proton acceptor in catalysis.

The protein belongs to the short-chain dehydrogenases/reductases (SDR) family.

Its subcellular location is the secreted. The catalysed reaction is a 3beta-hydroxysteroid + NADP(+) = a 3-oxosteroid + NADPH + H(+). The enzyme catalyses 17beta-estradiol + NAD(+) = estrone + NADH + H(+). It carries out the reaction 17beta-estradiol + NADP(+) = estrone + NADPH + H(+). It functions in the pathway steroid biosynthesis; estrogen biosynthesis. Inhibited by flavonoids including apigenin, luteolin, genistein, kaempferol and quercetin and also by carbenoxolone, zearalenone, glycyrrhetinic, curcumin and flufenamic acid. In terms of biological role, catalyzes the conversion of the 17-keto group of estrone, 4- and 5-androstenes and 5-alpha-androstanes into their 17-beta-hydroxyl metabolites and the conversion of the 3-keto group of 3-, 3,17- and 3,20- diketosteroids into their 3-hydroxyl metabolites. Exhibits reductive 3-beta-hydroxysteroid dehydrogenase activity toward 5-beta-androstanes, 5-beta-pregnanes, 4-pregnenes and bile acids. May also reduce endogenous and exogenous alpha-dicarbonyl compounds and xenobiotic alicyclic ketones. The polypeptide is Dehydrogenase/reductase SDR family member 11 (DHRS11) (Bos taurus (Bovine)).